A 371-amino-acid polypeptide reads, in one-letter code: 4-hydroxy-3-methylbut-2-en-1-yl diphosphate synthase (flavodoxin) (371 aa).

[4Fe-4S] cluster-binding residues include Cys270, Cys273, Cys305, and Glu312.

It belongs to the IspG family. Requires [4Fe-4S] cluster as cofactor.

The catalysed reaction is (2E)-4-hydroxy-3-methylbut-2-enyl diphosphate + oxidized [flavodoxin] + H2O + 2 H(+) = 2-C-methyl-D-erythritol 2,4-cyclic diphosphate + reduced [flavodoxin]. It functions in the pathway isoprenoid biosynthesis; isopentenyl diphosphate biosynthesis via DXP pathway; isopentenyl diphosphate from 1-deoxy-D-xylulose 5-phosphate: step 5/6. Its function is as follows. Converts 2C-methyl-D-erythritol 2,4-cyclodiphosphate (ME-2,4cPP) into 1-hydroxy-2-methyl-2-(E)-butenyl 4-diphosphate. The chain is 4-hydroxy-3-methylbut-2-en-1-yl diphosphate synthase (flavodoxin) from Shewanella piezotolerans (strain WP3 / JCM 13877).